A 95-amino-acid chain; its full sequence is Small ribosomal subunit protein bS18 (95 aa).

The protein belongs to the bacterial ribosomal protein bS18 family. In terms of assembly, part of the 30S ribosomal subunit. Forms a tight heterodimer with protein bS6.

Its function is as follows. Binds as a heterodimer with protein bS6 to the central domain of the 16S rRNA, where it helps stabilize the platform of the 30S subunit. This is Small ribosomal subunit protein bS18 from Rickettsia typhi (strain ATCC VR-144 / Wilmington).